The sequence spans 190 residues: ADP-ribosylation factor-like protein 6 (190 aa).

A lipid anchor (N-myristoyl glycine) is attached at Gly2. Residues 24–31 (GLDNSGKT), 69–73 (DMAGQ), and 130–133 (NKMD) each bind GTP.

This sequence belongs to the small GTPase superfamily. Arf family. As to expression, specifically expressed in ciliated cells.

The protein resides in the cytoplasm. The chain is ADP-ribosylation factor-like protein 6 from Caenorhabditis elegans.